Consider the following 263-residue polypeptide: Non-functional protein STAY-GREEN, chloroplastic (263 aa).

The transit peptide at 1-54 directs the protein to the chloroplast; that stretch reads MDTLTSAPLLTSKFKPSFSPQQKPCFPHRRRFENGKKKQSIVPVARLFGPAIFE.

It belongs to the staygreen family.

The protein resides in the plastid. It localises to the chloroplast. Its function is as follows. Non-functional protein probably interfering with the disassembling mechanism of the intact light-harvesting complex of photosystem II (LHCII) in the thylakoid membranes. Responsible for a stay-green phenotype. The polypeptide is Non-functional protein STAY-GREEN, chloroplastic (SGR) (Pisum sativum (Garden pea)).